Consider the following 567-residue polypeptide: Dihydroxy-acid dehydratase 2 (567 aa).

Cys56 serves as a coordination point for [2Fe-2S] cluster. Asp88 lines the Mg(2+) pocket. Position 129 (Cys129) interacts with [2Fe-2S] cluster. The Mg(2+) site is built by Asp130 and Lys131. An N6-carboxylysine modification is found at Lys131. Position 206 (Cys206) interacts with [2Fe-2S] cluster. Glu457 lines the Mg(2+) pocket. The Proton acceptor role is filled by Ser483.

The protein belongs to the IlvD/Edd family. As to quaternary structure, homodimer. [2Fe-2S] cluster is required as a cofactor. Requires Mg(2+) as cofactor.

It catalyses the reaction (2R)-2,3-dihydroxy-3-methylbutanoate = 3-methyl-2-oxobutanoate + H2O. The catalysed reaction is (2R,3R)-2,3-dihydroxy-3-methylpentanoate = (S)-3-methyl-2-oxopentanoate + H2O. It functions in the pathway amino-acid biosynthesis; L-isoleucine biosynthesis; L-isoleucine from 2-oxobutanoate: step 3/4. Its pathway is amino-acid biosynthesis; L-valine biosynthesis; L-valine from pyruvate: step 3/4. In terms of biological role, functions in the biosynthesis of branched-chain amino acids. Catalyzes the dehydration of (2R,3R)-2,3-dihydroxy-3-methylpentanoate (2,3-dihydroxy-3-methylvalerate) into 2-oxo-3-methylpentanoate (2-oxo-3-methylvalerate) and of (2R)-2,3-dihydroxy-3-methylbutanoate (2,3-dihydroxyisovalerate) into 2-oxo-3-methylbutanoate (2-oxoisovalerate), the penultimate precursor to L-isoleucine and L-valine, respectively. The protein is Dihydroxy-acid dehydratase 2 of Corynebacterium efficiens (strain DSM 44549 / YS-314 / AJ 12310 / JCM 11189 / NBRC 100395).